Consider the following 353-residue polypeptide: 4-hydroxy-3-methylbut-2-en-1-yl diphosphate synthase (flavodoxin) (353 aa).

[4Fe-4S] cluster is bound by residues Cys-263, Cys-266, Cys-298, and Glu-305.

Belongs to the IspG family. [4Fe-4S] cluster is required as a cofactor.

It carries out the reaction (2E)-4-hydroxy-3-methylbut-2-enyl diphosphate + oxidized [flavodoxin] + H2O + 2 H(+) = 2-C-methyl-D-erythritol 2,4-cyclic diphosphate + reduced [flavodoxin]. Its pathway is isoprenoid biosynthesis; isopentenyl diphosphate biosynthesis via DXP pathway; isopentenyl diphosphate from 1-deoxy-D-xylulose 5-phosphate: step 5/6. In terms of biological role, converts 2C-methyl-D-erythritol 2,4-cyclodiphosphate (ME-2,4cPP) into 1-hydroxy-2-methyl-2-(E)-butenyl 4-diphosphate. The sequence is that of 4-hydroxy-3-methylbut-2-en-1-yl diphosphate synthase (flavodoxin) from Geobacter sulfurreducens (strain ATCC 51573 / DSM 12127 / PCA).